Here is a 780-residue protein sequence, read N- to C-terminus: Calpain clp-1 (780 aa).

Residues 269-282 show a composition bias toward basic and acidic residues; the sequence is DVDPFVRPGPDPDR. Residues 269–300 form a disordered region; it reads DVDPFVRPGPDPDRGGGGSGPSPISPRPTTEP. The Calpain catalytic domain occupies 316–611; sequence LFEDPQFLAN…FEKMEICNLG (296 aa). Active-site residues include Cys-371, His-527, and Asn-551.

Belongs to the peptidase C2 family. In terms of tissue distribution, expressed in muscle and neuronal tissues. Expressed in the ventral and dorsal nerve cord, intestinal and hypodermal tissues.

The protein resides in the cytoplasm. It is found in the myofibril. It localises to the sarcomere. Its subcellular location is the m line. Functionally, calcium-regulated non-lysosomal thiol-protease which catalyzes limited proteolysis of substrates. Required for assembly and maintenance of integrin attachment complexes which are essential for maintenance of adult muscle. Proteolytic activity is activated in response to increased intracellular Ca(2+) levels during cell degeneration and promotes necrotic cell death. The protein is Calpain clp-1 of Caenorhabditis elegans.